The primary structure comprises 462 residues: ATP synthase subunit beta (462 aa).

ATP is bound at residue 150 to 157 (GGAGVGKT).

The protein belongs to the ATPase alpha/beta chains family. As to quaternary structure, F-type ATPases have 2 components, CF(1) - the catalytic core - and CF(0) - the membrane proton channel. CF(1) has five subunits: alpha(3), beta(3), gamma(1), delta(1), epsilon(1). CF(0) has three main subunits: a(1), b(2) and c(9-12). The alpha and beta chains form an alternating ring which encloses part of the gamma chain. CF(1) is attached to CF(0) by a central stalk formed by the gamma and epsilon chains, while a peripheral stalk is formed by the delta and b chains.

It is found in the cell membrane. It carries out the reaction ATP + H2O + 4 H(+)(in) = ADP + phosphate + 5 H(+)(out). Functionally, produces ATP from ADP in the presence of a proton gradient across the membrane. The catalytic sites are hosted primarily by the beta subunits. The sequence is that of ATP synthase subunit beta from Wigglesworthia glossinidia brevipalpis.